A 352-amino-acid chain; its full sequence is Uroporphyrinogen decarboxylase (352 aa).

Substrate contacts are provided by residues arginine 27–arginine 31, aspartate 77, tyrosine 154, threonine 209, and histidine 325.

The protein belongs to the uroporphyrinogen decarboxylase family. In terms of assembly, homodimer.

It is found in the cytoplasm. The catalysed reaction is uroporphyrinogen III + 4 H(+) = coproporphyrinogen III + 4 CO2. It functions in the pathway porphyrin-containing compound metabolism; protoporphyrin-IX biosynthesis; coproporphyrinogen-III from 5-aminolevulinate: step 4/4. Catalyzes the decarboxylation of four acetate groups of uroporphyrinogen-III to yield coproporphyrinogen-III. The chain is Uroporphyrinogen decarboxylase from Legionella pneumophila (strain Paris).